Consider the following 615-residue polypeptide: Filament-like plant protein 3 (615 aa).

The span at 1-18 (MDRRSWLWRRKSSEKSPG) shows a compositional bias: basic and acidic residues. Positions 1-55 (MDRRSWLWRRKSSEKSPGETESTGSVSSHSERFSDDQRSQSPELNSKPVTREEEA) are disordered. The span at 19-28 (ETESTGSVSS) shows a compositional bias: polar residues. A compositionally biased stretch (basic and acidic residues) spans 29-38 (HSERFSDDQR). The span at 39–48 (SQSPELNSKP) shows a compositional bias: polar residues. Coiled coils occupy residues 87 to 121 (AEEA…LEDR) and 148 to 211 (EEAI…KSEE). Disordered stretches follow at residues 258–289 (DNSS…SPSE) and 319–343 (PHSE…HVNQ). Residues 262-288 (DLKSSIDNQSDYSGRVSFSDNEMQSPS) show a composition bias toward polar residues. Residues 322–343 (EPGRKHSESNKELEKSNAHVNQ) show a composition bias toward basic and acidic residues. The stretch at 327–563 (HSESNKELEK…KQELEHHQET (237 aa)) forms a coiled coil.

This sequence belongs to the FPP family. In terms of assembly, interacts with WPP/MAF proteins. Binds to COG2; this interaction promotes the association between cortical microtubules and EXO70A1. As to expression, accumulates in preferentially xylem cells.

Its subcellular location is the vesicle. In terms of biological role, ensures, when in complex with COG2 and FPP2/VETH2, the correct secondary cell wall (SCW) deposition pattern by recruiting exocyst components to cortical microtubules in xylem cells during secondary cell wall deposition by recruiting EXO70A1. The protein is Filament-like plant protein 3 of Arabidopsis thaliana (Mouse-ear cress).